The sequence spans 359 residues: Probable dual-specificity RNA methyltransferase RlmN (359 aa).

Catalysis depends on Glu-93, which acts as the Proton acceptor. Residues 107-337 (KSERVTLCVS…VTMRYEKGHD (231 aa)) form the Radical SAM core domain. The cysteines at positions 114 and 342 are disulfide-linked. Cys-121, Cys-125, and Cys-128 together coordinate [4Fe-4S] cluster. S-adenosyl-L-methionine contacts are provided by residues 168 to 169 (GE), Ser-200, 223 to 225 (SLH), and Asn-299. The active-site S-methylcysteine intermediate is Cys-342.

This sequence belongs to the radical SAM superfamily. RlmN family. The cofactor is [4Fe-4S] cluster.

It is found in the cytoplasm. It carries out the reaction adenosine(2503) in 23S rRNA + 2 reduced [2Fe-2S]-[ferredoxin] + 2 S-adenosyl-L-methionine = 2-methyladenosine(2503) in 23S rRNA + 5'-deoxyadenosine + L-methionine + 2 oxidized [2Fe-2S]-[ferredoxin] + S-adenosyl-L-homocysteine. The enzyme catalyses adenosine(37) in tRNA + 2 reduced [2Fe-2S]-[ferredoxin] + 2 S-adenosyl-L-methionine = 2-methyladenosine(37) in tRNA + 5'-deoxyadenosine + L-methionine + 2 oxidized [2Fe-2S]-[ferredoxin] + S-adenosyl-L-homocysteine. Specifically methylates position 2 of adenine 2503 in 23S rRNA and position 2 of adenine 37 in tRNAs. This chain is Probable dual-specificity RNA methyltransferase RlmN, found in Akkermansia muciniphila (strain ATCC BAA-835 / DSM 22959 / JCM 33894 / BCRC 81048 / CCUG 64013 / CIP 107961 / Muc).